Reading from the N-terminus, the 193-residue chain is dTTP/UTP pyrophosphatase (193 aa).

The active-site Proton acceptor is the aspartate 71.

The protein belongs to the Maf family. YhdE subfamily. It depends on a divalent metal cation as a cofactor.

It localises to the cytoplasm. The catalysed reaction is dTTP + H2O = dTMP + diphosphate + H(+). It carries out the reaction UTP + H2O = UMP + diphosphate + H(+). Functionally, nucleoside triphosphate pyrophosphatase that hydrolyzes dTTP and UTP. May have a dual role in cell division arrest and in preventing the incorporation of modified nucleotides into cellular nucleic acids. This is dTTP/UTP pyrophosphatase from Dictyoglomus thermophilum (strain ATCC 35947 / DSM 3960 / H-6-12).